An 817-amino-acid polypeptide reads, in one-letter code: Sorting nexin-29 (817 aa).

Residues 37–181 (SDSDSRVTCL…ILFAINIDNK (145 aa)) enclose the RUN domain. Phosphoserine is present on residues serine 269, serine 292, serine 293, serine 331, and serine 345. The segment at 271–299 (DDEEDEQSSGDVFKKIPGAGESSEENSDR) is disordered. 2 disordered regions span residues 344–381 (KSIDDEDADENEDDVCGSMPGRKRPGHSESPEKPLDAG) and 417–460 (APLG…LPSA). A compositionally biased stretch (acidic residues) spans 347–358 (DDEDADENEDDV). Residues 369-378 (GHSESPEKPL) are compositionally biased toward basic and acidic residues. Residues 445-460 (SPPGQESPLSSLLPSA) show a composition bias toward low complexity. Position 451 is a phosphoserine (serine 451). The stretch at 466 to 546 (MTVSDLRQAI…VLKVQLKKYV (81 aa)) forms a coiled coil. Phosphoserine is present on serine 641. Phosphothreonine is present on threonine 643. A phosphoserine mark is found at serine 644 and serine 648. The region spanning 658–781 (ALINVWIPSV…PFFVDITPPG (124 aa)) is the PX domain. The tract at residues 784–817 (LTKNSRPKVASRFPKLARGHPRETRNVEPQSGDL) is disordered.

Belongs to the sorting nexin family.

The sequence is that of Sorting nexin-29 (SNX29) from Bos taurus (Bovine).